A 1132-amino-acid polypeptide reads, in one-letter code: Tyrosine-protein kinase JAK2 (1132 aa).

Residues 1–239 (MGMACLTMTE…RYRFRRFIQQ (239 aa)) form an interaction with cytokine/interferon/growth hormone receptors region. The FERM domain maps to 37-380 (PVLLVYLYHS…GYYRLTADAH (344 aa)). Tyrosine 119 bears the Phosphotyrosine; by autocatalysis mark. Phosphotyrosine occurs at positions 372 and 373. In terms of domain architecture, SH2; atypical spans 401–482 (HGPISMDFAI…SLKDLLNCYQ (82 aa)). A Phosphoserine modification is found at serine 523. The 265-residue stretch at 545–809 (LIFNESLGQG…AIIRDLNSLF (265 aa)) folds into the Protein kinase 1 domain. A phosphotyrosine mark is found at tyrosine 570 and tyrosine 813. Positions 849-1126 (LKFLQQLGKG…RDLALRVDQI (278 aa)) constitute a Protein kinase 2 domain. Residue 855–863 (LGKGNFGSV) participates in ATP binding. A Phosphotyrosine; by autocatalysis modification is found at tyrosine 868. Lysine 882 lines the ATP pocket. Phosphotyrosine; by autocatalysis occurs at positions 966 and 972. Aspartate 976 functions as the Proton acceptor in the catalytic mechanism. A phosphotyrosine; by autocatalysis mark is found at tyrosine 1007 and tyrosine 1008.

This sequence belongs to the protein kinase superfamily. Tyr protein kinase family. JAK subfamily. In terms of assembly, interacts with IL23R, SKB1 and STAM2. Interacts with EPOR. Interacts with LYN. Interacts with SIRPA. Interacts with SH2B1. Interacts with TEC. Interacts with IFNGR2 (via intracellular domain). Interacts with LEPR (Isoform B). Interacts with HSP90AB1; promotes functional activation in a heat shock-dependent manner. Interacts with STRA6. Interacts with RHEX; this interaction occurs in a erythropoietin (EPO)-dependent manner. Interacts with ASB2; the interaction targets JAK2 for Notch-induced proteasomal degradation. Requires Mg(2+) as cofactor. In terms of processing, autophosphorylated, leading to regulate its activity. Leptin promotes phosphorylation on tyrosine residues, including phosphorylation on Tyr-813. Autophosphorylation on Tyr-119 in response to EPO down-regulates its kinase activity. Autophosphorylation on Tyr-868, Tyr-966 and Tyr-972 in response to growth hormone (GH) are required for maximal kinase activity. Also phosphorylated by TEC. Phosphorylated on tyrosine residues in response to interferon gamma signaling. Phosphorylated on tyrosine residues in response to a signaling cascade that is activated by increased cellular retinol. Undergoes Notch-induced ubiquitination and subsequent proteasomal degradation which is mediated by ASB1 or ASB2, the substrate-recognition components of probable ECS E3 ubiquitin-protein ligase complexes.

It localises to the endomembrane system. The protein resides in the cytoplasm. The protein localises to the nucleus. It carries out the reaction L-tyrosyl-[protein] + ATP = O-phospho-L-tyrosyl-[protein] + ADP + H(+). Its activity is regulated as follows. Regulated by autophosphorylation, can both activate or decrease activity. Heme regulates its activity by enhancing the phosphorylation on Tyr-1007 and Tyr-1008. In terms of biological role, non-receptor tyrosine kinase involved in various processes such as cell growth, development, differentiation or histone modifications. Mediates essential signaling events in both innate and adaptive immunity. In the cytoplasm, plays a pivotal role in signal transduction via its association with type I receptors such as growth hormone (GHR), prolactin (PRLR), leptin (LEPR), erythropoietin (EPOR), thrombopoietin (THPO); or type II receptors including IFN-alpha, IFN-beta, IFN-gamma and multiple interleukins. Following ligand-binding to cell surface receptors, phosphorylates specific tyrosine residues on the cytoplasmic tails of the receptor, creating docking sites for STATs proteins. Subsequently, phosphorylates the STATs proteins once they are recruited to the receptor. Phosphorylated STATs then form homodimer or heterodimers and translocate to the nucleus to activate gene transcription. For example, cell stimulation with erythropoietin (EPO) during erythropoiesis leads to JAK2 autophosphorylation, activation, and its association with erythropoietin receptor (EPOR) that becomes phosphorylated in its cytoplasmic domain. Then, STAT5 (STAT5A or STAT5B) is recruited, phosphorylated and activated by JAK2. Once activated, dimerized STAT5 translocates into the nucleus and promotes the transcription of several essential genes involved in the modulation of erythropoiesis. Part of a signaling cascade that is activated by increased cellular retinol and that leads to the activation of STAT5 (STAT5A or STAT5B). In addition, JAK2 mediates angiotensin-2-induced ARHGEF1 phosphorylation. Plays a role in cell cycle by phosphorylating CDKN1B. Cooperates with TEC through reciprocal phosphorylation to mediate cytokine-driven activation of FOS transcription. In the nucleus, plays a key role in chromatin by specifically mediating phosphorylation of 'Tyr-41' of histone H3 (H3Y41ph), a specific tag that promotes exclusion of CBX5 (HP1 alpha) from chromatin. Up-regulates the potassium voltage-gated channel activity of KCNA3. The polypeptide is Tyrosine-protein kinase JAK2 (Pongo abelii (Sumatran orangutan)).